The sequence spans 618 residues: UvrABC system protein C (618 aa).

In terms of domain architecture, GIY-YIG spans 13–92 (DKPGVYLMKN…IKKYRPKYNI (80 aa)). Residues 204–239 (LDIVENFKLNMEKAAENLEFEKAAMLRDKINIIEKI) form the UVR domain.

Belongs to the UvrC family. As to quaternary structure, interacts with UvrB in an incision complex.

The protein resides in the cytoplasm. Functionally, the UvrABC repair system catalyzes the recognition and processing of DNA lesions. UvrC both incises the 5' and 3' sides of the lesion. The N-terminal half is responsible for the 3' incision and the C-terminal half is responsible for the 5' incision. The chain is UvrABC system protein C from Clostridium botulinum (strain Kyoto / Type A2).